The following is a 307-amino-acid chain: Mitochondrial thiamine pyrophosphate carrier 1 (307 aa).

Solcar repeat units lie at residues 13 to 95 (VSTT…IGSF), 105 to 190 (SPQL…IKIF), and 203 to 305 (PFTL…FMNK). 6 helical membrane passes run 19–36 (LVAG…IAPL), 76–96 (IMYI…GSFL), 108–126 (LYSC…LASY), 160–184 (MGFF…FGVY), 210–226 (LAGP…TFPL), and 280–297 (GVTM…ISLW).

The protein belongs to the mitochondrial carrier (TC 2.A.29) family.

The protein resides in the mitochondrion inner membrane. Mitochondrial transporter that mediates uptake of thiamine pyrophosphate (ThPP) into mitochondria. The protein is Mitochondrial thiamine pyrophosphate carrier 1 (TPC1) of Candida glabrata (strain ATCC 2001 / BCRC 20586 / JCM 3761 / NBRC 0622 / NRRL Y-65 / CBS 138) (Yeast).